The sequence spans 1019 residues: Exportin-T (1019 aa).

The protein belongs to the exportin family.

The protein resides in the nucleus. The protein localises to the cytoplasm. Functionally, tRNA nucleus export receptor which facilitates tRNA translocation across the nuclear pore complex. Involved in pre-tRNA splicing, probably by affecting the interaction of pre-tRNA with splicing endonuclease. The chain is Exportin-T (LOS1) from Chaetomium globosum (strain ATCC 6205 / CBS 148.51 / DSM 1962 / NBRC 6347 / NRRL 1970) (Soil fungus).